Here is a 570-residue protein sequence, read N- to C-terminus: Formate--tetrahydrofolate ligase (570 aa).

An ATP-binding site is contributed by 65–72; that stretch reads TPYGEGKT.

This sequence belongs to the formate--tetrahydrofolate ligase family.

The catalysed reaction is (6S)-5,6,7,8-tetrahydrofolate + formate + ATP = (6R)-10-formyltetrahydrofolate + ADP + phosphate. It participates in one-carbon metabolism; tetrahydrofolate interconversion. This Shewanella piezotolerans (strain WP3 / JCM 13877) protein is Formate--tetrahydrofolate ligase.